The primary structure comprises 256 residues: Small ribosomal subunit protein uS2 (256 aa).

Belongs to the universal ribosomal protein uS2 family.

The sequence is that of Small ribosomal subunit protein uS2 from Methylococcus capsulatus (strain ATCC 33009 / NCIMB 11132 / Bath).